The sequence spans 437 residues: Protein arginine methyltransferase NDUFAF7 homolog, mitochondrial (437 aa).

Positions 21-49 (RPNLGATGTPKMEPPKEQPEASSKAESGH) are disordered.

Belongs to the NDUFAF7 family.

It localises to the mitochondrion. The enzyme catalyses L-arginyl-[protein] + 2 S-adenosyl-L-methionine = N(omega),N(omega)'-dimethyl-L-arginyl-[protein] + 2 S-adenosyl-L-homocysteine + 2 H(+). Functionally, arginine methyltransferase involved in the assembly or stability of mitochondrial NADH:ubiquinone oxidoreductase complex (complex I). This is Protein arginine methyltransferase NDUFAF7 homolog, mitochondrial from Drosophila melanogaster (Fruit fly).